Reading from the N-terminus, the 604-residue chain is Crossover junction endonuclease MUS81 (604 aa).

The segment at 268-290 is disordered; sequence SSAPSDYLDPGQKSANVASSPHR. The region spanning 322-419 is the ERCC4 domain; it reads ELYIDHREVR…HIFYLVEETS (98 aa).

Belongs to the XPF family. As to quaternary structure, interacts with EME1. It depends on Mg(2+) as a cofactor.

Its subcellular location is the nucleus. In terms of biological role, interacts with EME1 to form a DNA structure-specific endonuclease with substrate preference for branched DNA structures with a 5'-end at the branch nick. Typical substrates include 3'-flap structures, D-loops, replication forks and nicked Holliday junctions. May be required in mitosis for the processing of stalled or collapsed replication fork intermediates. May be required in meiosis for the repair of meiosis-specific double strand breaks subsequent to single-end invasion (SEI). The protein is Crossover junction endonuclease MUS81 (MUS81) of Eremothecium gossypii (strain ATCC 10895 / CBS 109.51 / FGSC 9923 / NRRL Y-1056) (Yeast).